We begin with the raw amino-acid sequence, 559 residues long: Pentatricopeptide repeat-containing protein At4g38010 (559 aa).

PPR repeat units lie at residues 70–104 (SSFS…GFSP), 105–139 (DMFT…GFYD), 140–170 (DIYV…MPVR), 171–201 (DVVS…MDVE), 203–233 (NLAT…ILKR), 238–268 (SLET…LEKK), 269–304 (DKVS…GIKP), 305–339 (DGHI…GIKW), 340–370 (DTHI…IRSK), 371–405 (NVFT…GFKP), 406–440 (NLVT…EYNL), and 443–473 (KLEH…MPVK). A type E motif region spans residues 478–554 (ICGAILSACK…VPGSSYIEKF (77 aa)).

It belongs to the PPR family. PCMP-E subfamily.

This is Pentatricopeptide repeat-containing protein At4g38010 (PCMP-E45) from Arabidopsis thaliana (Mouse-ear cress).